The sequence spans 185 residues: Putative 3-methyladenine DNA glycosylase (185 aa).

It belongs to the DNA glycosylase MPG family.

The chain is Putative 3-methyladenine DNA glycosylase from Rhizobium meliloti (strain 1021) (Ensifer meliloti).